The following is a 311-amino-acid chain: Methionyl-tRNA formyltransferase (311 aa).

Position 112-115 (112-115 (SLLP)) interacts with (6S)-5,6,7,8-tetrahydrofolate.

It belongs to the Fmt family.

The catalysed reaction is L-methionyl-tRNA(fMet) + (6R)-10-formyltetrahydrofolate = N-formyl-L-methionyl-tRNA(fMet) + (6S)-5,6,7,8-tetrahydrofolate + H(+). Its function is as follows. Attaches a formyl group to the free amino group of methionyl-tRNA(fMet). The formyl group appears to play a dual role in the initiator identity of N-formylmethionyl-tRNA by promoting its recognition by IF2 and preventing the misappropriation of this tRNA by the elongation apparatus. The chain is Methionyl-tRNA formyltransferase from Chelativorans sp. (strain BNC1).